Consider the following 367-residue polypeptide: Glutamate 5-kinase (367 aa).

Lysine 10 lines the ATP pocket. Substrate contacts are provided by serine 50, aspartate 137, and asparagine 149. ATP contacts are provided by residues 169 to 170 (TD) and 211 to 217 (TGGMGTK). In terms of domain architecture, PUA spans 275–353 (AGEITVDEGA…QQIDAILGYE (79 aa)).

The protein belongs to the glutamate 5-kinase family.

It is found in the cytoplasm. It catalyses the reaction L-glutamate + ATP = L-glutamyl 5-phosphate + ADP. Its pathway is amino-acid biosynthesis; L-proline biosynthesis; L-glutamate 5-semialdehyde from L-glutamate: step 1/2. Catalyzes the transfer of a phosphate group to glutamate to form L-glutamate 5-phosphate. The polypeptide is Glutamate 5-kinase (Enterobacter sp. (strain 638)).